We begin with the raw amino-acid sequence, 478 residues long: Sulfate adenylyltransferase subunit 1 (478 aa).

A tr-type G domain is found at 28 to 244 (KTMLRFLTCG…LESVDVVNAR (217 aa)). Residues 37–44 (GSVDDGKS) form a G1 region. Position 37–44 (37–44 (GSVDDGKS)) interacts with GTP. The interval 95-99 (GITID) is G2. Residues 116–119 (DTPG) are G3. GTP is bound by residues 116-120 (DTPGH) and 171-174 (NKMD). Residues 171–174 (NKMD) form a G4 region. The interval 209–211 (SAL) is G5.

Belongs to the TRAFAC class translation factor GTPase superfamily. Classic translation factor GTPase family. CysN/NodQ subfamily. As to quaternary structure, heterodimer composed of CysD, the smaller subunit, and CysN.

The enzyme catalyses sulfate + ATP + H(+) = adenosine 5'-phosphosulfate + diphosphate. Its pathway is sulfur metabolism; hydrogen sulfide biosynthesis; sulfite from sulfate: step 1/3. In terms of biological role, with CysD forms the ATP sulfurylase (ATPS) that catalyzes the adenylation of sulfate producing adenosine 5'-phosphosulfate (APS) and diphosphate, the first enzymatic step in sulfur assimilation pathway. APS synthesis involves the formation of a high-energy phosphoric-sulfuric acid anhydride bond driven by GTP hydrolysis by CysN coupled to ATP hydrolysis by CysD. The sequence is that of Sulfate adenylyltransferase subunit 1 from Yersinia pseudotuberculosis serotype O:1b (strain IP 31758).